The chain runs to 489 residues: Arginine biosynthesis bifunctional protein ArgJ 2, mitochondrial (489 aa).

The transit peptide at Met-1 to His-11 directs the protein to the mitochondrion. The substrate site is built by Thr-205, Lys-234, Thr-245, Glu-341, and Asn-484. Thr-245 serves as the catalytic Nucleophile.

Belongs to the ArgJ family. Heterodimer of an alpha and a beta chain. The alpha and beta chains are autoproteolytically processed from a single precursor protein within the mitochondrion.

Its subcellular location is the mitochondrion matrix. It carries out the reaction N(2)-acetyl-L-ornithine + L-glutamate = N-acetyl-L-glutamate + L-ornithine. The catalysed reaction is L-glutamate + acetyl-CoA = N-acetyl-L-glutamate + CoA + H(+). It participates in amino-acid biosynthesis; L-arginine biosynthesis; L-ornithine and N-acetyl-L-glutamate from L-glutamate and N(2)-acetyl-L-ornithine (cyclic): step 1/1. The protein operates within amino-acid biosynthesis; L-arginine biosynthesis; N(2)-acetyl-L-ornithine from L-glutamate: step 1/4. Catalyzes two activities which are involved in the cyclic version of arginine biosynthesis: the synthesis of acetylglutamate from glutamate and acetyl-CoA, and of ornithine by transacetylation between acetylornithine and glutamate. This Sclerotinia sclerotiorum (strain ATCC 18683 / 1980 / Ss-1) (White mold) protein is Arginine biosynthesis bifunctional protein ArgJ 2, mitochondrial.